Reading from the N-terminus, the 1756-residue chain is Protein TIC 214 (1756 aa).

The next 6 helical transmembrane spans lie at 18–38 (VSGP…LPFG), 54–74 (GYGI…FLSM), 79–99 (IYAA…YMFF), 128–148 (LFMD…NPVL), 163–183 (ISFM…LTIF), and 210–230 (FSLL…LPFL). A disordered region spans residues 1469–1504 (KNKQVEDGQDKNGQVEDQDGQDQDGQVEDQQTDGKK). Over residues 1471–1482 (KQVEDGQDKNGQ) the composition is skewed to basic and acidic residues. A compositionally biased stretch (acidic residues) spans 1484–1499 (EDQDGQDQDGQVEDQQ).

It belongs to the TIC214 family. Part of the Tic complex.

It localises to the plastid. The protein localises to the chloroplast inner membrane. Its function is as follows. Involved in protein precursor import into chloroplasts. May be part of an intermediate translocation complex acting as a protein-conducting channel at the inner envelope. This chain is Protein TIC 214, found in Pinus thunbergii (Japanese black pine).